A 425-amino-acid chain; its full sequence is Alpha/beta hydrolase xenA (425 aa).

Residue Asp366 is part of the active site.

The protein belongs to the AB hydrolase superfamily. FUS2 hydrolase family. Homodimer.

It participates in mycotoxin biosynthesis. Alpha/beta hydrolase; part of the gene cluster that mediates the biosynthesis of xenoacremones such as xenoacremone A, a compound that shows inhibitory activity toward the PI3K/AKT signaling pathway and which has the ability to induce apoptosis of A549 lung cancer cells. Within the pathway, cooperation of the hybrid PKS-NRPS xenE and the trans-acting enoyl reductase xenG is responsible for the formation of the reduced tyrosine-nonaketide derivative. The alpha/beta hydrolase xenA then accelerates intramolecular nucleophilic attack to give a pyrrolidone derivative. Subsequently, three enzymes, xenF, xenD, and xenC, coordinately participate in the conversion to xenoacremone B. XenF catalyzes sigmatropic rearrangement to form an A-ring, which leads to an unusual intermediate with a hexane ring, which is required for the formation of the tricarbocyclic product. Epoxidation catalyzed by xenD and the formation of the paracyclophane ether catalyzed by xenC initiate a spontaneous intramolecular Diels-Alder (IMDA) reaction to yield xenoacremone B. Spontaneous hydration of xenoacremone B leads to the formation of xenoacremone A, which undergoes subsequent methylation to afford xenoacremone C. The sequence is that of Alpha/beta hydrolase xenA from Xenoacremonium sinensis (Endophyte fungus).